The sequence spans 787 residues: MAAGLPPLVVSPDLVKSRPERPAGQAPAQSPDAPEVQAQPSAPARSLPTPESPPPAVALPPVGTPAEPAAGAAPAESGPIAAGATEIRAQQISGTRAVELVAEGNAELRRDGILLSADRLTYSELTDEARAEGNVLVAQGTDRVEGPRANLKIAEQVGEFEAPQYRFSRRSDPAPGEPVREISGSGHADVMHFEGENQYRLENATWSTCQADDPDWYIKARDLELDYDREVGVVRGGSVIFQDVPIFWWPWAEFPLVAQRQSGFLSPTVGVSNKAGVDISVPYYWNLAPNYDATFAPRFMGRRGVQLGGEFRYLTPGYRGESRVEWLPRDAVTGEERALGSVQHQQQITPNLYGSLDLNAVSDDQYFEDLSSRLSVASQVNLLREGRLSYVASDWWSASALVQSYQTLSGEDPYRRLPQLLLNANRQDMAAGTVFGFRGEYVQFEHTDSRKPEGSRFTLYPQLSLPFERPGYYVTPKIGVHHTQYALDRDLSGESDSITRSLPIFTLDSGLNFERDTTLFAREYLQTLEPRIYYVRTPYRNQDDIPVFDTARFDFGFAQIFSENLYAGGDRIADANQVTAAVTSRLIDPGTGAERMRATIGQRYYFDEQRVALPGEPRRGERRADMLAAFSGRVTTSSSIDSAWQYNPREQLTERFNFAVRYQPEFAKALNLGYRYSREVLEDLDLSGQWPLGGGWYGVARVTRSLKENRITETIAGLEYDGGCWVVRSAVHRFATNPDDVTEALFVQLELNGLASVGSSPVNLLKRSVAGYGKINEPVSDRVFGAY.

Residues 1 to 78 (MAAGLPPLVV…AAGAAPAESG (78 aa)) form a disordered region. The segment covering 59-78 (LPPVGTPAEPAAGAAPAESG) has biased composition (low complexity).

It belongs to the LptD family. As to quaternary structure, component of the lipopolysaccharide transport and assembly complex. Interacts with LptE and LptA.

Functionally, together with LptE, is involved in the assembly of lipopolysaccharide (LPS) at the surface of the outer membrane. The protein is LPS-assembly protein LptD of Aromatoleum aromaticum (strain DSM 19018 / LMG 30748 / EbN1) (Azoarcus sp. (strain EbN1)).